Reading from the N-terminus, the 172-residue chain is Podoplanin (172 aa).

A signal peptide spans 1–22; sequence MWTVPVLFWVLGSVWFWDSAQG. Residues 23–141 lie on the Extracellular side of the membrane; that stretch reads GTIGVNEDDI…KKDGLPVVTL (119 aa). O-linked (GalNAc...) threonine glycosylation is found at Thr-37, Thr-51, Thr-52, Thr-53, and Thr-56. The tract at residues 49–132 is disordered; the sequence is KITTTGATGG…AGDETQTTDK (84 aa). Over residues 51–63 the composition is skewed to polar residues; sequence TTTGATGGLNEST. N-linked (GlcNAc...) asparagine glycosylation is present at Asn-60. O-linked (GalNAc...) threonine glycans are attached at residues Thr-63, Thr-71, and Thr-77. The segment covering 72–81 has biased composition (basic and acidic residues); that stretch reads QRERGTKPPL. O-linked (GalNAc...) serine glycosylation is present at Ser-85. A glycan (O-linked (GalNAc...) threonine) is linked at Thr-86. Ser-87 carries an O-linked (GalNAc...) serine glycan. O-linked (GalNAc...) threonine glycosylation occurs at Thr-89. Ser-90 carries O-linked (GalNAc...) serine glycosylation. Residues 90–99 show a composition bias toward basic and acidic residues; it reads SDHDHREHES. Residues Thr-100, Thr-101, Thr-102, Thr-107, and Thr-115 are each glycosylated (O-linked (GalNAc...) threonine). Low complexity predominate over residues 100–109; it reads TTTVKVVTSH. Positions 110-132 are enriched in basic and acidic residues; that stretch reads SVDKKTSHPNRDNAGDETQTTDK. A helical membrane pass occupies residues 142–162; sequence VGIIVGVLLAIGFVGGIFIVV. Residues 143–147 are requires for dimerization and lipidd rafts association; the sequence is GIIVG. Residues 163-172 lie on the Cytoplasmic side of the membrane; it reads MKKISGRFSP. A requires for interaction with MSN and EZR region spans residues 164–165; it reads KK.

Belongs to the podoplanin family. Homodimer. Interacts with CLEC1B; the interaction is independent of CLEC1B glycosylation and activates CLEC1B; the interaction is dependent of sialic acid on O-glycans. Interacts with CD9; this interaction is homophilic and attenuates platelet aggregation and pulmonary metastasis induced by PDPN. Interacts with LGALS8; the interaction is glycosylation-dependent; may participate in connection of the lymphatic endothelium to the surrounding extracellular matrix. Interacts with HSPA9. Interacts (via extracellular domain) with CD44; this interaction is required for PDPN-mediated directional migration and regulation of lamellipodia extension/stabilization during cell spreading and migration. Interacts (via cytoplasmic domain) with MSN and EZR; activates RHOA and promotes epithelial-mesenchymal transition. Interacts with CCL21; relocalized PDPN to the basolateral membrane. Post-translationally, extensively O-glycosylated. Contains sialic acid residues. O-glycosylation is necessary for platelet aggregation activity. Disialylated at Thr-52; sialic acid is critical for platelet-aggregating activity and for CLEC1B interaction. In terms of processing, phosphorylated by PKA; decreases cell migration. The N-terminus is blocked. As to expression, detected at high levels in lung and brain, at lower levels in kidney, stomach, liver, spleen and esophagus, and not detected in skin and small intestine. Expressed in epithelial cells of choroid plexus, ependyma, glomerulus and alveolus, in mesothelial cells and in endothelia of lymphatic vessels. Also expressed in stromal cells of peripheral lymphoid tissue and thymic epithelial cells. Detected in carcinoma cell lines and cultured fibroblasts. Expressed at higher levels in colon carcinomas than in normal colon tissue.

Its subcellular location is the membrane. The protein resides in the cell projection. The protein localises to the lamellipodium membrane. It is found in the filopodium membrane. It localises to the microvillus membrane. Its subcellular location is the ruffle membrane. The protein resides in the membrane raft. The protein localises to the apical cell membrane. It is found in the basolateral cell membrane. It localises to the invadopodium. Its function is as follows. Mediates effects on cell migration and adhesion through its different partners. During development plays a role in blood and lymphatic vessels separation by binding CLEC1B, triggering CLEC1B activation in platelets and leading to platelet activation and/or aggregation. Interaction with CD9, on the contrary, attenuates platelet aggregation and pulmonary metastasis induced by PDPN. Mediates effects on cell migration and adhesion through its different partners. Through MSN or EZR interaction promotes epithelial-mesenchymal transition (EMT) leading to ERZ phosphorylation and triggering RHOA activation leading to cell migration increase and invasiveness. Interaction with CD44 promotes directional cell migration in epithelial and tumor cells. In lymph nodes (LNs), controls fibroblastic reticular cells (FRCs) adhesion to the extracellular matrix (ECM) and contraction of the actomyosin by maintaining ERM proteins (EZR; MSN and RDX) and MYL9 activation through association with unknown transmembrane proteins. Engagement of CLEC1B by PDPN promotes FRCs relaxation by blocking lateral membrane interactions leading to reduction of ERM proteins (EZR; MSN and RDX) and MYL9 activation. Through binding with LGALS8 may participate in connection of the lymphatic endothelium to the surrounding extracellular matrix. In keratinocytes, induces changes in cell morphology showing an elongated shape, numerous membrane protrusions, major reorganization of the actin cytoskeleton, increased motility and decreased cell adhesion. Controls invadopodia stability and maturation leading to efficient degradation of the extracellular matrix (ECM) in tumor cells through modulation of RHOC activity in order to activate ROCK1/ROCK2 and LIMK1/LIMK2 and inactivation of CFL1. Required for normal lung cell proliferation and alveolus formation at birth. Does not function as a water channel or as a regulator of aquaporin-type water channels. Does not have any effect on folic acid or amino acid transport. This Mus musculus (Mouse) protein is Podoplanin.